The sequence spans 147 residues: Nucleoside diphosphate kinase (147 aa).

ATP contacts are provided by K9, F57, R85, T91, R102, and N112. The active-site Pros-phosphohistidine intermediate is H115.

The protein belongs to the NDK family. As to quaternary structure, homotetramer. The cofactor is Mg(2+).

It is found in the cytoplasm. It catalyses the reaction a 2'-deoxyribonucleoside 5'-diphosphate + ATP = a 2'-deoxyribonucleoside 5'-triphosphate + ADP. The enzyme catalyses a ribonucleoside 5'-diphosphate + ATP = a ribonucleoside 5'-triphosphate + ADP. Its function is as follows. Major role in the synthesis of nucleoside triphosphates other than ATP. The ATP gamma phosphate is transferred to the NDP beta phosphate via a ping-pong mechanism, using a phosphorylated active-site intermediate. This Listeria innocua serovar 6a (strain ATCC BAA-680 / CLIP 11262) protein is Nucleoside diphosphate kinase.